The sequence spans 187 residues: UPF0340 protein SPN23F05980 (187 aa).

It belongs to the UPF0340 family.

The chain is UPF0340 protein SPN23F05980 from Streptococcus pneumoniae (strain ATCC 700669 / Spain 23F-1).